A 362-amino-acid chain; its full sequence is 3-dehydroquinate synthase (362 aa).

Residues 71–76 (DGEQYK), 105–109 (GVVGD), 129–130 (TT), K142, K151, and 169–172 (CLKT) contribute to the NAD(+) site. Positions 184, 247, and 264 each coordinate Zn(2+).

The protein belongs to the sugar phosphate cyclases superfamily. Dehydroquinate synthase family. It depends on Co(2+) as a cofactor. Zn(2+) serves as cofactor. The cofactor is NAD(+).

The protein localises to the cytoplasm. The catalysed reaction is 7-phospho-2-dehydro-3-deoxy-D-arabino-heptonate = 3-dehydroquinate + phosphate. Its pathway is metabolic intermediate biosynthesis; chorismate biosynthesis; chorismate from D-erythrose 4-phosphate and phosphoenolpyruvate: step 2/7. Its function is as follows. Catalyzes the conversion of 3-deoxy-D-arabino-heptulosonate 7-phosphate (DAHP) to dehydroquinate (DHQ). The protein is 3-dehydroquinate synthase of Escherichia coli O6:K15:H31 (strain 536 / UPEC).